A 193-amino-acid chain; its full sequence is Ribosomal RNA small subunit methyltransferase G (193 aa).

Residues G72, F77, 123–124, and R137 contribute to the S-adenosyl-L-methionine site; that span reads IE.

It belongs to the methyltransferase superfamily. RNA methyltransferase RsmG family.

The protein localises to the cytoplasm. The catalysed reaction is guanosine(527) in 16S rRNA + S-adenosyl-L-methionine = N(7)-methylguanosine(527) in 16S rRNA + S-adenosyl-L-homocysteine. Specifically methylates the N7 position of guanine in position 527 of 16S rRNA. The sequence is that of Ribosomal RNA small subunit methyltransferase G from Wolinella succinogenes (strain ATCC 29543 / DSM 1740 / CCUG 13145 / JCM 31913 / LMG 7466 / NCTC 11488 / FDC 602W) (Vibrio succinogenes).